The primary structure comprises 156 residues: Small ribosomal subunit protein uS7 (156 aa).

This sequence belongs to the universal ribosomal protein uS7 family. Part of the 30S ribosomal subunit. Contacts proteins S9 and S11.

Functionally, one of the primary rRNA binding proteins, it binds directly to 16S rRNA where it nucleates assembly of the head domain of the 30S subunit. Is located at the subunit interface close to the decoding center, probably blocks exit of the E-site tRNA. This chain is Small ribosomal subunit protein uS7, found in Streptomyces avermitilis (strain ATCC 31267 / DSM 46492 / JCM 5070 / NBRC 14893 / NCIMB 12804 / NRRL 8165 / MA-4680).